The primary structure comprises 230 residues: Orotidine 5'-phosphate decarboxylase (230 aa).

Substrate contacts are provided by residues Asp-10, Lys-31, 58–67 (DLKLHDIPNT), Thr-117, Arg-179, Gln-188, Gly-208, and Arg-209. Lys-60 serves as the catalytic Proton donor.

The protein belongs to the OMP decarboxylase family. Type 1 subfamily. Homodimer.

The enzyme catalyses orotidine 5'-phosphate + H(+) = UMP + CO2. The protein operates within pyrimidine metabolism; UMP biosynthesis via de novo pathway; UMP from orotate: step 2/2. Functionally, catalyzes the decarboxylation of orotidine 5'-monophosphate (OMP) to uridine 5'-monophosphate (UMP). The chain is Orotidine 5'-phosphate decarboxylase from Staphylococcus aureus (strain USA300).